Here is a 1101-residue protein sequence, read N- to C-terminus: Rho GTPase-activating protein 30 (1101 aa).

Positions 20–215 constitute a Rho-GAP domain; sequence CDLREHLQHS…FILTHVDQLF (196 aa). Disordered stretches follow at residues 305 to 397 and 450 to 499; these read RKLP…VRAL and LQPR…LEDS. Basic and acidic residues predominate over residues 309–319; sequence LRVEDREEKSS. Residues 348–367 show a composition bias toward low complexity; that stretch reads SSSSQPSSLMPESLESNSME. A compositionally biased stretch (pro residues) spans 451 to 465; the sequence is QPRPSPALGPGPPGS. Ser578 bears the Phosphoserine mark. The interval 622–848 is disordered; it reads LGPKPINWEG…EQKSIDVETE (227 aa). 4 stretches are compositionally biased toward basic and acidic residues: residues 659–677, 686–762, 786–821, and 829–844; these read TRQE…REEA, EAGK…KGDD, EVVH…HSED, and DDRK…KSID. Position 875 is a phosphoserine (Ser875). Disordered regions lie at residues 878–901 and 968–987; these read EINE…GMEA and CPRP…GSRA. A Phosphoserine modification is found at Ser996. Residues 1044-1076 form a disordered region; sequence SRPLSCLERPPEGTEGSEPRSRLSLPPRELHPV. Residues 1052–1064 are compositionally biased toward basic and acidic residues; it reads RPPEGTEGSEPRS.

In terms of assembly, interacts with RHOU in a GTP-independent manner.

It is found in the cytoplasmic vesicle. Its function is as follows. GTPase-activating protein (GAP) for RAC1 and RHOA, but not for CDC42. This chain is Rho GTPase-activating protein 30 (Arhgap30), found in Mus musculus (Mouse).